The primary structure comprises 202 residues: Large ribosomal subunit protein uL18 (202 aa).

Belongs to the universal ribosomal protein uL18 family. Part of the 50S ribosomal subunit. Contacts the 5S and 23S rRNAs.

Its function is as follows. This is one of the proteins that bind and probably mediate the attachment of the 5S RNA into the large ribosomal subunit, where it forms part of the central protuberance. This Methanopyrus kandleri (strain AV19 / DSM 6324 / JCM 9639 / NBRC 100938) protein is Large ribosomal subunit protein uL18.